Consider the following 162-residue polypeptide: NADH-quinone oxidoreductase subunit I (162 aa).

2 consecutive 4Fe-4S ferredoxin-type domains span residues 52–82 and 93–122; these read LRRY…IEAG and VRYD…EGPN. 8 residues coordinate [4Fe-4S] cluster: cysteine 62, cysteine 65, cysteine 68, cysteine 72, cysteine 102, cysteine 105, cysteine 108, and cysteine 112.

This sequence belongs to the complex I 23 kDa subunit family. In terms of assembly, NDH-1 is composed of 14 different subunits. Subunits NuoA, H, J, K, L, M, N constitute the membrane sector of the complex. [4Fe-4S] cluster is required as a cofactor.

The protein resides in the cell inner membrane. It carries out the reaction a quinone + NADH + 5 H(+)(in) = a quinol + NAD(+) + 4 H(+)(out). In terms of biological role, NDH-1 shuttles electrons from NADH, via FMN and iron-sulfur (Fe-S) centers, to quinones in the respiratory chain. The immediate electron acceptor for the enzyme in this species is believed to be ubiquinone. Couples the redox reaction to proton translocation (for every two electrons transferred, four hydrogen ions are translocated across the cytoplasmic membrane), and thus conserves the redox energy in a proton gradient. The protein is NADH-quinone oxidoreductase subunit I of Afipia carboxidovorans (strain ATCC 49405 / DSM 1227 / KCTC 32145 / OM5) (Oligotropha carboxidovorans).